Here is a 343-residue protein sequence, read N- to C-terminus: Aspartate carbamoyltransferase catalytic subunit (343 aa).

Carbamoyl phosphate-binding residues include arginine 54 and threonine 55. Lysine 82 serves as a coordination point for L-aspartate. Carbamoyl phosphate-binding residues include arginine 104, histidine 134, and glutamine 137. Residues arginine 177 and arginine 232 each contribute to the L-aspartate site. Residues glycine 277 and proline 278 each coordinate carbamoyl phosphate. The tract at residues 323-343 (PDQSNPQRNVTNTSNWQETKR) is disordered.

This sequence belongs to the aspartate/ornithine carbamoyltransferase superfamily. ATCase family. Heterododecamer (2C3:3R2) of six catalytic PyrB chains organized as two trimers (C3), and six regulatory PyrI chains organized as three dimers (R2).

It carries out the reaction carbamoyl phosphate + L-aspartate = N-carbamoyl-L-aspartate + phosphate + H(+). It participates in pyrimidine metabolism; UMP biosynthesis via de novo pathway; (S)-dihydroorotate from bicarbonate: step 2/3. Its function is as follows. Catalyzes the condensation of carbamoyl phosphate and aspartate to form carbamoyl aspartate and inorganic phosphate, the committed step in the de novo pyrimidine nucleotide biosynthesis pathway. The chain is Aspartate carbamoyltransferase catalytic subunit from Renibacterium salmoninarum (strain ATCC 33209 / DSM 20767 / JCM 11484 / NBRC 15589 / NCIMB 2235).